The primary structure comprises 1790 residues: Intracellular protein transport protein USO1 (1790 aa).

The tract at residues 1–724 is globular head; that stretch reads MDIIQGLIQQ…LSHDPDEEPI (724 aa). ARM repeat units lie at residues 45-89, 127-170, 173-213, 215-260, 261-312, 314-362, 363-429, 431-512, 543-584, and 586-630; these read AFSR…LFIR, QFSL…AVMA, PLKA…MAVV, DSPH…NILK, YNTS…VSLT, EPGN…NMVR, SNEH…LKAY, MDNF…PFKL, GNDL…LIYW, and FGDF…LGVA. A disordered region spans residues 452–484; the sequence is TNNVGDNAKENGGSNKSDKESDSDKDTDGKDGT. The interval 465 to 487 is charged (hyper-hydrophilic); it reads SNKSDKESDSDKDTDGKDGTEYE. The span at 467–484 shows a compositional bias: basic and acidic residues; that stretch reads KSDKESDSDKDTDGKDGT. The stretch at 725 to 1790 forms a coiled coil; it reads NKISFEEVEK…EEDEEEGQVA (1066 aa). The tract at residues 991 to 1790 is dispensable for the protein function; that stretch reads ESSIQLSNLQ…EEDEEEGQVA (800 aa). Disordered regions lie at residues 1185 to 1221, 1326 to 1351, 1485 to 1547, 1645 to 1667, 1722 to 1742, and 1762 to 1790; these read EITS…SNLK, KEKS…EEQL, GLKK…EDIK, QELD…EVRK, DNLK…SEID, and LKDL…GQVA. The span at 1194–1209 shows a compositional bias: basic and acidic residues; that stretch reads ESIKKKNDELEGEVKA. Composition is skewed to basic and acidic residues over residues 1485-1512, 1519-1547, 1655-1667, and 1722-1738; these read GLKK…KLES, TELK…EDIK, QKSE…EVRK, and DNLK…NEDR. Serine 1770 is modified (phosphoserine). The segment covering 1770 to 1790 has biased composition (acidic residues); the sequence is SSDEEDDEEDDEEDEEEGQVA.

Belongs to the VDP/USO1/EDE1 family. Homodimer. Dimerizes by parallel association of the tails, resulting in an elongated structure with two globular head domains side by side, and a long rod-like tail structure.

The protein localises to the cytoplasm. It is found in the cytoskeleton. Its subcellular location is the cytoplasmic vesicle membrane. The protein resides in the endoplasmic reticulum membrane. It localises to the golgi apparatus membrane. Functionally, required for protein transport from the ER to the Golgi complex. The protein is Intracellular protein transport protein USO1 (USO1) of Saccharomyces cerevisiae (strain ATCC 204508 / S288c) (Baker's yeast).